A 148-amino-acid chain; its full sequence is Oleosin 16 kDa (148 aa).

The interval 1–21 (MADQHRGVIGGGGYGDRGGQE) is disordered. Ala2 bears the N-acetylalanine mark. The polar stretch occupies residues 2-34 (ADQHRGVIGGGGYGDRGGQEQQEKQPFMMTALK). The segment covering 8 to 17 (VIGGGGYGDR) has biased composition (gly residues). Residues 35 to 106 (TVTAATAGGS…AALSVFSWMY (72 aa)) form a hydrophobic region. Helical transmembrane passes span 43 to 63 (GSMLVLSGLILAGTVIALTVA), 66 to 86 (VLVIFSPVLVPAAIALALMAA), and 87 to 107 (GFVTSGGLGVAALSVFSWMYK).

The protein belongs to the oleosin family.

The protein localises to the lipid droplet. Its subcellular location is the membrane. Functionally, may have a structural role to stabilize the lipid body during desiccation of the seed by preventing coalescence of the oil. Probably interacts with both lipid and phospholipid moieties of lipid bodies. May also provide recognition signals for specific lipase anchorage in lipolysis during seedling growth. The polypeptide is Oleosin 16 kDa (OLE16) (Oryza sativa subsp. japonica (Rice)).